Reading from the N-terminus, the 658-residue chain is DNA mismatch repair protein MutL (658 aa).

The segment covering 114-130 (RQEDSSHATQVKAEDGK) has biased composition (basic and acidic residues). Disordered regions lie at residues 114 to 138 (RQEDSSHATQVKAEDGKLSSPTAAA) and 353 to 405 (PMPS…HSLS). The span at 361–372 (ENLFDSASNHPT) shows a compositional bias: polar residues.

This sequence belongs to the DNA mismatch repair MutL/HexB family.

Its function is as follows. This protein is involved in the repair of mismatches in DNA. It is required for dam-dependent methyl-directed DNA mismatch repair. May act as a 'molecular matchmaker', a protein that promotes the formation of a stable complex between two or more DNA-binding proteins in an ATP-dependent manner without itself being part of a final effector complex. In Neisseria gonorrhoeae (strain NCCP11945), this protein is DNA mismatch repair protein MutL.